A 277-amino-acid polypeptide reads, in one-letter code: Adenylate kinase (277 aa).

Position 72–77 (Gly-72–Thr-77) interacts with ATP. The tract at residues Ala-92–Val-121 is NMP. AMP contacts are provided by residues Thr-93, Arg-98, Gly-119 to Val-121, Gly-148 to Arg-151, and Gln-155. The tract at residues Gly-189–Asp-226 is LID. ATP contacts are provided by residues Arg-190 and Ser-199 to Tyr-200. AMP-binding residues include Arg-223 and Arg-234. Residue Gln-262 participates in ATP binding.

It belongs to the adenylate kinase family. AK2 subfamily. In terms of assembly, monomer.

Its subcellular location is the cytoplasm. It localises to the cytosol. It is found in the mitochondrion intermembrane space. It carries out the reaction AMP + ATP = 2 ADP. Its function is as follows. Catalyzes the reversible transfer of the terminal phosphate group between ATP and AMP. Plays an important role in cellular energy homeostasis and in adenine nucleotide metabolism. Adenylate kinase activity is critical for regulation of the phosphate utilization and the AMP de novo biosynthesis pathways. The chain is Adenylate kinase from Eremothecium gossypii (strain ATCC 10895 / CBS 109.51 / FGSC 9923 / NRRL Y-1056) (Yeast).